The primary structure comprises 481 residues: Phosphoglycerate kinase 1, chloroplastic (481 aa).

The transit peptide at 1 to 75 (MASAAASSAF…VRGKGSRGVV (75 aa)) directs the protein to the chloroplast. S81 is subject to Phosphoserine. Residues A99, D100, N102, R116, T138, H139, G141, R142, R197, H229, and R230 each coordinate (2R)-3-phosphoglycerate. G275 is a binding site for ADP. G275 serves as a coordination point for CDP. AMP-binding residues include K277 and K281. Residue K281 participates in ATP binding. G299 contacts ADP. G299 lines the CDP pocket. G300 and G372 together coordinate AMP. ATP-binding residues include G300 and G372. Positions 397 and 402 each coordinate CDP. F402 provides a ligand contact to ADP. E403 provides a ligand contact to AMP. E403, D434, and S435 together coordinate ATP. D434 lines the Mg(2+) pocket.

This sequence belongs to the phosphoglycerate kinase family. Monomer. Binds to FTSZ2-1 and FTSZ2-2. Requires Mg(2+) as cofactor.

It is found in the plastid. It localises to the chloroplast. The enzyme catalyses (2R)-3-phosphoglycerate + ATP = (2R)-3-phospho-glyceroyl phosphate + ADP. It functions in the pathway carbohydrate biosynthesis; Calvin cycle. Its function is as follows. May trigger the phosphorylation of FTSZ2-1 and FTSZ2-2. The sequence is that of Phosphoglycerate kinase 1, chloroplastic from Arabidopsis thaliana (Mouse-ear cress).